A 351-amino-acid polypeptide reads, in one-letter code: Cyanuric acid amidohydrolase (351 aa).

The RU A stretch occupies residues 1–96; it reads MPSLRAHVFR…HWTVFARETV (96 aa). Residues arginine 53 and 77–78 contribute to the substrate site; that span reads SG. Residues 103–240 are RU B; it reads ALAIGVSRTP…HEIIVLGMSA (138 aa). Lysine 153 is a catalytic residue. Substrate is bound by residues arginine 185 and 223 to 224; that span reads SS. Serine 223 functions as the Nucleophile in the catalytic mechanism. The interval 246-351 is RU C; it reads LSIDHAVMLD…PVAIIVEKEQ (106 aa). Glutamate 283 contacts Mg(2+). Substrate is bound by residues arginine 310 and 329 to 330; that span reads SG. Mg(2+)-binding residues include alanine 332, glutamine 335, glycine 336, proline 337, and glycine 340.

Belongs to the cyclic amide hydrolase (CyAH) family. As to quaternary structure, homotetramer.

It catalyses the reaction cyanurate + H2O = 1-carboxybiuret + H(+). Its pathway is xenobiotic degradation; atrazine degradation; biuret from cyanurate: step 1/1. Inhibited by barbituric acid. In terms of biological role, responsible for the hydrolysis of cyanuric acid, an intermediate formed during catabolism of s-triazine based compounds in herbicides such as atrazine and polymers such as melamine. Catalyzes the hydrolytic opening of the s-triazine ring of cyanuric acid (2,4,6-trihydroxy-s-triazine) to yield carbon dioxide and carboxybiuret, which spontaneously decarboxylates to biuret. The sequence is that of Cyanuric acid amidohydrolase from Rhizobium leguminosarum bv. trifolii (strain WSM1325).